Consider the following 318-residue polypeptide: Trans-prenyltransferase (318 aa).

A helical transmembrane segment spans residues 1–21; the sequence is MLHLIYISIIVVLIIILISYT. Residues Lys85, Arg88, and His122 each coordinate isopentenyl diphosphate. Residues Asp129 and Asp135 each coordinate Mg(2+). Arg140 lines the dimethylallyl diphosphate pocket. Arg141 is an isopentenyl diphosphate binding site. Dimethylallyl diphosphate contacts are provided by Lys216, Thr217, and Gln254.

The protein belongs to the FPP/GGPP synthase family. Asfivirus trans-prenyltransferase subfamily. Mg(2+) is required as a cofactor.

It is found in the host endoplasmic reticulum. The protein localises to the host membrane. The catalysed reaction is isopentenyl diphosphate + dimethylallyl diphosphate = (2E)-geranyl diphosphate + diphosphate. It carries out the reaction isopentenyl diphosphate + (2E)-geranyl diphosphate = (2E,6E)-farnesyl diphosphate + diphosphate. The enzyme catalyses isopentenyl diphosphate + (2E,6E)-farnesyl diphosphate = (2E,6E,10E)-geranylgeranyl diphosphate + diphosphate. It catalyses the reaction isopentenyl diphosphate + (2E,6E,10E)-geranylgeranyl diphosphate = (2E,6E,10E,14E)-geranylfarnesyl diphosphate + diphosphate. The protein operates within isoprenoid biosynthesis; farnesyl diphosphate biosynthesis; farnesyl diphosphate from geranyl diphosphate and isopentenyl diphosphate: step 1/1. Its pathway is isoprenoid biosynthesis; geranyl diphosphate biosynthesis; geranyl diphosphate from dimethylallyl diphosphate and isopentenyl diphosphate: step 1/1. It participates in isoprenoid biosynthesis; geranylgeranyl diphosphate biosynthesis; geranylgeranyl diphosphate from farnesyl diphosphate and isopentenyl diphosphate: step 1/1. In terms of biological role, trans-prenyltransferase that catalyzes the sequential condensation of isopentenyl diphosphate (IPP) with different allylic diphosphates, such as dimethylallyl diphosphate (DMAPP), geranyl diphosphate (GPP), farnesyl diphosphate (FPP) and geranylgeranyl diphosphate (GGPP), farnesyl diphosphate being the best allylic substrate. This chain is Trans-prenyltransferase, found in African swine fever virus (strain Badajoz 1971 Vero-adapted) (Ba71V).